Here is a 346-residue protein sequence, read N- to C-terminus: 4-hydroxy-2-oxovalerate aldolase (346 aa).

The Pyruvate carboxyltransferase domain maps to 8-260; the sequence is VTLHDMSLRD…ETGIDLYKIM (253 aa). 16–17 contacts substrate; the sequence is RD. Aspartate 17 contributes to the Mn(2+) binding site. Residue histidine 20 is the Proton acceptor of the active site. Positions 170 and 199 each coordinate substrate. Histidine 199 and histidine 201 together coordinate Mn(2+). A substrate-binding site is contributed by tyrosine 290.

This sequence belongs to the 4-hydroxy-2-oxovalerate aldolase family.

It catalyses the reaction (S)-4-hydroxy-2-oxopentanoate = acetaldehyde + pyruvate. The polypeptide is 4-hydroxy-2-oxovalerate aldolase (nahM) (Stutzerimonas stutzeri (Pseudomonas stutzeri)).